We begin with the raw amino-acid sequence, 1098 residues long: Ran-binding protein 16 (1098 aa).

The protein belongs to the exportin family. Binds to nucleoporins and the GTP-bound form of Ran.

The protein localises to the cytoplasm. It is found in the nucleus. May function as a nuclear transport receptor. This is Ran-binding protein 16 (Ranbp16) from Drosophila melanogaster (Fruit fly).